Reading from the N-terminus, the 299-residue chain is MSEPIDLSQISPALKAEILAEALPYIRRYHGKTVVIKYGGNAMTEERLKQGFARDVILLKLVGINPVIVHGGGPQIDQALKKIGKQGTFIQGMRVTDEETMEVVEWVLGGEVQQDIVTLINHFGGHAVGLTGKDGGLIHARKLMMPDRDNPGEYVDIGQVGEVEAINPAVVKALQDDAFIPVISPIGFGEDGLSYNINADLVAGKLATVLNAEKLVMMTNIPGVMDKEGNLLTDLSAREIDALFEDGTISGGMLPKISSALDAAKSGVKSVHIVDGRIEHSVLLEILTEQPFGTMIRSH.

Residues 72–73, Arg-94, and Asn-196 contribute to the substrate site; that span reads GG.

The protein belongs to the acetylglutamate kinase family. ArgB subfamily.

The protein resides in the cytoplasm. The catalysed reaction is N-acetyl-L-glutamate + ATP = N-acetyl-L-glutamyl 5-phosphate + ADP. Its pathway is amino-acid biosynthesis; L-arginine biosynthesis; N(2)-acetyl-L-ornithine from L-glutamate: step 2/4. Its function is as follows. Catalyzes the ATP-dependent phosphorylation of N-acetyl-L-glutamate. This is Acetylglutamate kinase from Burkholderia mallei (strain NCTC 10247).